The sequence spans 277 residues: Diaminopimelate epimerase (277 aa).

Residues N15, Q48, and N66 each coordinate substrate. C75 acts as the Proton donor in catalysis. Residues G76 to N77, N156, N189, and E207 to R208 contribute to the substrate site. Residue C216 is the Proton acceptor of the active site. A substrate-binding site is contributed by G217 to S218.

It belongs to the diaminopimelate epimerase family. Homodimer.

It is found in the cytoplasm. The catalysed reaction is (2S,6S)-2,6-diaminopimelate = meso-2,6-diaminopimelate. Its pathway is amino-acid biosynthesis; L-lysine biosynthesis via DAP pathway; DL-2,6-diaminopimelate from LL-2,6-diaminopimelate: step 1/1. Catalyzes the stereoinversion of LL-2,6-diaminopimelate (L,L-DAP) to meso-diaminopimelate (meso-DAP), a precursor of L-lysine and an essential component of the bacterial peptidoglycan. This chain is Diaminopimelate epimerase, found in Acidiphilium cryptum (strain JF-5).